We begin with the raw amino-acid sequence, 260 residues long: DNA-directed RNA polymerase subunit Rpo3 (260 aa).

Belongs to the archaeal Rpo3/eukaryotic RPB3 RNA polymerase subunit family. As to quaternary structure, part of the RNA polymerase complex.

It is found in the cytoplasm. It carries out the reaction RNA(n) + a ribonucleoside 5'-triphosphate = RNA(n+1) + diphosphate. In terms of biological role, DNA-dependent RNA polymerase (RNAP) catalyzes the transcription of DNA into RNA using the four ribonucleoside triphosphates as substrates. This chain is DNA-directed RNA polymerase subunit Rpo3, found in Pyrobaculum aerophilum (strain ATCC 51768 / DSM 7523 / JCM 9630 / CIP 104966 / NBRC 100827 / IM2).